The chain runs to 1513 residues: DNA polymerase alpha catalytic subunit (1513 aa).

Positions 235–254 (STNQNANASDSKRVSNQTND) are disordered. Zn(2+)-binding residues include cysteine 1344, cysteine 1347, cysteine 1370, cysteine 1373, cysteine 1404, cysteine 1409, cysteine 1422, and cysteine 1427. A CysA-type zinc finger spans residues 1344–1373 (CPHCSESYHFPGIFQDGKNNTLSGLLCIKC). A CysB motif motif is present at residues 1404–1427 (CQEPACGAVSRQLLYNNKCINLAC).

This sequence belongs to the DNA polymerase type-B family.

Its subcellular location is the nucleus. It carries out the reaction DNA(n) + a 2'-deoxyribonucleoside 5'-triphosphate = DNA(n+1) + diphosphate. Functionally, polymerase alpha in a complex with DNA primase is a replicative polymerase. The sequence is that of DNA polymerase alpha catalytic subunit from Oxytricha trifallax (Sterkiella histriomuscorum).